We begin with the raw amino-acid sequence, 118 residues long: Small ribosomal subunit protein uS13 (118 aa).

The tract at residues 94–118 (GLPVRGQRTKTNARTRKGPRKPIKK) is disordered.

The protein belongs to the universal ribosomal protein uS13 family. In terms of assembly, part of the 30S ribosomal subunit. Forms a loose heterodimer with protein S19. Forms two bridges to the 50S subunit in the 70S ribosome.

In terms of biological role, located at the top of the head of the 30S subunit, it contacts several helices of the 16S rRNA. In the 70S ribosome it contacts the 23S rRNA (bridge B1a) and protein L5 of the 50S subunit (bridge B1b), connecting the 2 subunits; these bridges are implicated in subunit movement. Contacts the tRNAs in the A and P-sites. The chain is Small ribosomal subunit protein uS13 from Mannheimia succiniciproducens (strain KCTC 0769BP / MBEL55E).